The following is a 571-amino-acid chain: Tail sheath protein (571 aa).

It belongs to the myoviridae tail sheath protein family. In terms of assembly, homomultimer.

Its subcellular location is the virion. The protein resides in the host cytoplasm. Its function is as follows. Polymerizes as an extended structure around the baseplate-tail tube complex. During ejection, the sheath shifts to a contracted form, thereby making the inner tail tube protrude through the host cell envelope. The polypeptide is Tail sheath protein (Bacillus subtilis (Bacteriophage SP01)).